Reading from the N-terminus, the 255-residue chain is Pimeloyl-[acyl-carrier protein] methyl ester esterase (255 aa).

Positions 16–241 constitute an AB hydrolase-1 domain; that stretch reads LVLLHGWGMN…QSSHAPFMTE (226 aa). Substrate contacts are provided by residues W22, 82–83, and 143–147; these read SL and FMALQ. S82 (nucleophile) is an active-site residue. Catalysis depends on residues D207 and H235. H235 contributes to the substrate binding site.

The protein belongs to the AB hydrolase superfamily. Carboxylesterase BioH family. Monomer.

It localises to the cytoplasm. The enzyme catalyses 6-carboxyhexanoyl-[ACP] methyl ester + H2O = 6-carboxyhexanoyl-[ACP] + methanol + H(+). The protein operates within cofactor biosynthesis; biotin biosynthesis. In terms of biological role, the physiological role of BioH is to remove the methyl group introduced by BioC when the pimeloyl moiety is complete. It allows to synthesize pimeloyl-ACP via the fatty acid synthetic pathway through the hydrolysis of the ester bonds of pimeloyl-ACP esters. This Vibrio parahaemolyticus serotype O3:K6 (strain RIMD 2210633) protein is Pimeloyl-[acyl-carrier protein] methyl ester esterase.